The following is a 353-amino-acid chain: MNTIVFNKLGGAVLFEDRGTPDRERGSRTFSGFLDNPHTGPEVGIPDGPPLKDNLSLRHRRTGARQNGGKVRHKRQALQDMARPLKQWLYKHRDNPYPTKTEKILLALGSQMTLVQVSNWFANARRRLKNTVRQPDLSWALRIKLYNKYVQGNAERLSVSSDGDSCSEDGENPPRNHMNEEGYSTPAHHTVIKGESSAIKAGGRPESRAAEDYVSPPKYKSSLLNRYLNDSLRHVMATSTAMMGKTRRRNHSGSFSSNEFEEELVSPSSSETEGTFVYRTDTPDIGSTKGDSAANRRGPSKDDTYWKEINAAMALTNLAQGKDEVQGTTSCIIQKSSHIAEVKTVKLPLVQRF.

A compositionally biased stretch (basic and acidic residues) spans 18-27 (RGTPDRERGS). Residues 18–50 (RGTPDRERGSRTFSGFLDNPHTGPEVGIPDGPP) form a disordered region. The segment at residues 71–132 (VRHKRQALQD…NARRRLKNTV (62 aa)) is a DNA-binding region (homeobox; TALE-type). Disordered regions lie at residues 157-183 (LSVS…EEGY) and 243-302 (MGKT…PSKD).

It belongs to the TALE/IRO homeobox family.

The protein localises to the nucleus. May act as a morphogenetic regulator of cell adhesion. Participates in the early events that lead to differentiation. This is Homeobox protein Mohawk (Mkx) from Mus musculus (Mouse).